A 1012-amino-acid polypeptide reads, in one-letter code: Ubiquitin-activating enzyme E1 1 (1012 aa).

Arg22 is an ATP binding site. At Ser264 the chain carries Phosphoserine. ATP-binding residues include Ala437 and Asp463. Mg(2+) contacts are provided by Asp465 and Glu468. Residues Asn471, Arg474, Lys487, Val513, Asp537, and Asn538 each contribute to the ATP site. Mg(2+) is bound at residue Asp537. A Glycyl lysine isopeptide (Lys-Gly) (interchain with G-Cter in ubiquitin) cross-link involves residue Lys588. Cys593 serves as the catalytic Glycyl thioester intermediate. Ser903 bears the Phosphoserine mark.

This sequence belongs to the ubiquitin-activating E1 family. As to quaternary structure, monomer. Interacts with the E2 ubiquitin-conjugating enzyme ubc4.

The protein resides in the cytoplasm. It is found in the nucleus. It carries out the reaction ATP + ubiquitin + [E1 ubiquitin-activating enzyme]-L-cysteine = AMP + diphosphate + S-ubiquitinyl-[E1 ubiquitin-activating enzyme]-L-cysteine.. Its pathway is protein modification; protein ubiquitination. Ubiquitin transfer between the E1 ubiquitin-activating enzyme ptr3 and E2 ubiquitin-conjugating enzyme ubc4 is enhanced by the presence of magnesium and ATP, or adenylated ubiquitin. Its function is as follows. E1 ubiquitin-activating enzyme that catalyzes the first step in ubiquitin conjugation to mark cellular proteins for degradation through the ubiquitin-proteasome system. Activates ubiquitin by first adenylating its C-terminal glycine residue with ATP, and thereafter linking this residue to the side chain of a cysteine residue in E1, yielding a ubiquitin-E1 thioester and free AMP. The sequence is that of Ubiquitin-activating enzyme E1 1 (ptr3) from Schizosaccharomyces pombe (strain 972 / ATCC 24843) (Fission yeast).